A 363-amino-acid chain; its full sequence is MSKNYHIAVLPGDGIGPEVMTQALKVLNAVRNRFAMRITTSHYDVGGAAIDNHGQPLPPATVEGCEQADAVLFGSVGGPKWEHLPPDQQPERGALLPLRKHFKLFSNLRPAKLYQGLEAFCPLRADIAANGFDIQCVRELTGGIYFGQPKGREGSGQYEKAFDTEVYHRFEIERIARIAFESARKRRHKVTSIDKANVLQSSILWREIVNEIATEYPDVELAHMYIDNATMQLIKDPSQFDVLLCSNLFGDILSDECAMITGSMGMLPSASLNEQGFGLYEPAGGSAPDIAGKNIANPIAQILSLALLLRYSLDADDAASAIERAINRALEEGIRTGDLARGAAAVSTDEMGDIIARYVAEGV.

An NAD(+)-binding site is contributed by 78–91 (GPKWEHLPPDQQPE). Arg-99, Arg-109, Arg-138, and Asp-227 together coordinate substrate. Residues Asp-227, Asp-251, and Asp-255 each contribute to the Mg(2+) site. Position 285–297 (285–297 (GSAPDIAGKNIAN)) interacts with NAD(+).

The protein belongs to the isocitrate and isopropylmalate dehydrogenases family. LeuB type 1 subfamily. Homodimer. Mg(2+) is required as a cofactor. The cofactor is Mn(2+).

The protein localises to the cytoplasm. It carries out the reaction (2R,3S)-3-isopropylmalate + NAD(+) = 4-methyl-2-oxopentanoate + CO2 + NADH. Its pathway is amino-acid biosynthesis; L-leucine biosynthesis; L-leucine from 3-methyl-2-oxobutanoate: step 3/4. Functionally, catalyzes the oxidation of 3-carboxy-2-hydroxy-4-methylpentanoate (3-isopropylmalate) to 3-carboxy-4-methyl-2-oxopentanoate. The product decarboxylates to 4-methyl-2 oxopentanoate. In Shigella flexneri, this protein is 3-isopropylmalate dehydrogenase.